Here is a 398-residue protein sequence, read N- to C-terminus: 8-amino-7-oxononanoate synthase (398 aa).

Residues Arg-22 and Arg-29 each contribute to the substrate site. Position 109–110 (109–110 (GW)) interacts with pyridoxal 5'-phosphate. His-141 serves as a coordination point for substrate. Residues Ser-189, 214–217 (DEAH), and 242–245 (TFSK) each bind pyridoxal 5'-phosphate. Position 245 is an N6-(pyridoxal phosphate)lysine (Lys-245). Substrate is bound at residue Thr-359.

This sequence belongs to the class-II pyridoxal-phosphate-dependent aminotransferase family. BioF subfamily. Homodimer. Pyridoxal 5'-phosphate is required as a cofactor.

The enzyme catalyses 6-carboxyhexanoyl-[ACP] + L-alanine + H(+) = (8S)-8-amino-7-oxononanoate + holo-[ACP] + CO2. The protein operates within cofactor biosynthesis; biotin biosynthesis. In terms of biological role, catalyzes the decarboxylative condensation of pimeloyl-[acyl-carrier protein] and L-alanine to produce 8-amino-7-oxononanoate (AON), [acyl-carrier protein], and carbon dioxide. In Gluconacetobacter diazotrophicus (strain ATCC 49037 / DSM 5601 / CCUG 37298 / CIP 103539 / LMG 7603 / PAl5), this protein is 8-amino-7-oxononanoate synthase.